Reading from the N-terminus, the 115-residue chain is Putative HNH nuclease YajD (115 aa).

The HNH domain occupies 27–75; that stretch reads CGRCSREFVYSNLRELTVHHIDHDHTNNPEDGSNWELLCLYCHDHEHSK.

This sequence belongs to the HNH nuclease family.

In Salmonella typhi, this protein is Putative HNH nuclease YajD (yajD).